We begin with the raw amino-acid sequence, 194 residues long: ATP-dependent Clp protease proteolytic subunit (194 aa).

S98 acts as the Nucleophile in catalysis. H123 is a catalytic residue.

Belongs to the peptidase S14 family. In terms of assembly, fourteen ClpP subunits assemble into 2 heptameric rings which stack back to back to give a disk-like structure with a central cavity, resembling the structure of eukaryotic proteasomes.

It is found in the cytoplasm. The enzyme catalyses Hydrolysis of proteins to small peptides in the presence of ATP and magnesium. alpha-casein is the usual test substrate. In the absence of ATP, only oligopeptides shorter than five residues are hydrolyzed (such as succinyl-Leu-Tyr-|-NHMec, and Leu-Tyr-Leu-|-Tyr-Trp, in which cleavage of the -Tyr-|-Leu- and -Tyr-|-Trp bonds also occurs).. In terms of biological role, cleaves peptides in various proteins in a process that requires ATP hydrolysis. Has a chymotrypsin-like activity. Plays a major role in the degradation of misfolded proteins. This is ATP-dependent Clp protease proteolytic subunit from Clostridium kluyveri (strain NBRC 12016).